The sequence spans 544 residues: Chaperonin GroEL 3 (544 aa).

ATP is bound by residues 30–33 (TLGP), lysine 51, 87–91 (DGTTT), glycine 415, and aspartate 495.

The protein belongs to the chaperonin (HSP60) family. Forms a cylinder of 14 subunits composed of two heptameric rings stacked back-to-back. Interacts with the co-chaperonin GroES.

Its subcellular location is the cytoplasm. It carries out the reaction ATP + H2O + a folded polypeptide = ADP + phosphate + an unfolded polypeptide.. Its function is as follows. Together with its co-chaperonin GroES, plays an essential role in assisting protein folding. The GroEL-GroES system forms a nano-cage that allows encapsulation of the non-native substrate proteins and provides a physical environment optimized to promote and accelerate protein folding. The protein is Chaperonin GroEL 3 of Psychromonas ingrahamii (strain DSM 17664 / CCUG 51855 / 37).